Here is a 72-residue protein sequence, read N- to C-terminus: Lantibiotic Flvbeta.e (72 aa).

A propeptide spans 1 to 34 (MNNKEFNMEQFKKLAAVVSEDELDEMLDENVTGA) (cleaved by FlvT). Positions 36-40 (SSIPC) form a cross-link, lanthionine (Ser-Cys); by FlvM2. 2,3-didehydroalanine (Ser); by FlvM2 is present on S37. 2,3-didehydrobutyrine; by FlvM2 is present on residues T48 and T49. Cross-links (beta-methyllanthionine (Thr-Cys); by FlvM2) lie at residues 55-61 (TTGFDWC), 63-66 (TGAC), and 67-70 (TTSC).

In terms of processing, contains LL-lanthionine and DL-beta-methyllanthionine, when coepressed in E.coli with the flavecin synthetase FlvM2.

The protein resides in the secreted. Functionally, lanthionine-containing peptide antibiotic (lantibiotic) that is probably active on Gram-positive bacteria, since its analog [Del1]Flvbeta.e shows antibacterial activity against Gram-positive bacteria. This activity is not synergistically enhanced by [Del2]Flvalpha.a, an analog of Flvalpha.a, which is encoded by the same operon than Flvbeta.e. The bactericidal activity of lantibiotics is based on depolarization of energized bacterial cytoplasmic membranes, initiated by the formation of aqueous transmembrane pores. In Ruminococcus flavefaciens, this protein is Lantibiotic Flvbeta.e.